We begin with the raw amino-acid sequence, 325 residues long: Eukaryotic translation initiation factor 3 subunit I (325 aa).

5 WD repeats span residues 1–39 (MKPI…VWYS), 43–81 (ERLG…LWDC), 87–127 (LALL…FFDL), 135–175 (NNEP…QYSA), and 180–217 (VLVN…LFDS). At T219 the chain carries Phosphothreonine. WD repeat units lie at residues 221-267 (EHQK…KFEA) and 275-316 (EEEF…YFDP). Position 264 is an N6-acetyllysine (K264). Residue K282 forms a Glycyl lysine isopeptide (Lys-Gly) (interchain with G-Cter in ubiquitin) linkage. Y308 is subject to Phosphotyrosine.

As to quaternary structure, component of the eukaryotic translation initiation factor 3 (eIF-3) complex, which is composed of 13 subunits: EIF3A, EIF3B, EIF3C, EIF3D, EIF3E, EIF3F, EIF3G, EIF3H, EIF3I, EIF3J, EIF3K, EIF3L and EIF3M. The eIF-3 complex appears to include 3 stable modules: module A is composed of EIF3A, EIF3B, EIF3G and EIF3I; module B is composed of EIF3F, EIF3H, and EIF3M; and module C is composed of EIF3C, EIF3D, EIF3E, EIF3K and EIF3L. EIF3C of module C binds EIF3B of module A and EIF3H of module B, thereby linking the three modules. EIF3J is a labile subunit that binds to the eIF-3 complex via EIF3B. The eIF-3 complex interacts with RPS6KB1 under conditions of nutrient depletion. Mitogenic stimulation leads to binding and activation of a complex composed of MTOR and RPTOR, leading to phosphorylation and release of RPS6KB1 and binding of EIF4B to eIF-3. Post-translationally, phosphorylated by TGF-beta type II receptor.

The protein resides in the cytoplasm. Component of the eukaryotic translation initiation factor 3 (eIF-3) complex, which is required for several steps in the initiation of protein synthesis. The eIF-3 complex associates with the 40S ribosome and facilitates the recruitment of eIF-1, eIF-1A, eIF-2:GTP:methionyl-tRNAi and eIF-5 to form the 43S pre-initiation complex (43S PIC). The eIF-3 complex stimulates mRNA recruitment to the 43S PIC and scanning of the mRNA for AUG recognition. The eIF-3 complex is also required for disassembly and recycling of post-termination ribosomal complexes and subsequently prevents premature joining of the 40S and 60S ribosomal subunits prior to initiation. The eIF-3 complex specifically targets and initiates translation of a subset of mRNAs involved in cell proliferation, including cell cycling, differentiation and apoptosis, and uses different modes of RNA stem-loop binding to exert either translational activation or repression. The protein is Eukaryotic translation initiation factor 3 subunit I of Homo sapiens (Human).